The sequence spans 540 residues: 2,3-bisphosphoglycerate-independent phosphoglycerate mutase (540 aa).

Positions 24 and 74 each coordinate Mn(2+). S74 (phosphoserine intermediate) is an active-site residue. Substrate-binding positions include H135, 165-166, R197, R203, 268-271, and K341; these read RD and RPDR. Positions 408, 412, 449, 450, and 467 each coordinate Mn(2+).

Belongs to the BPG-independent phosphoglycerate mutase family. In terms of assembly, monomer. Requires Mn(2+) as cofactor.

The enzyme catalyses (2R)-2-phosphoglycerate = (2R)-3-phosphoglycerate. It functions in the pathway carbohydrate degradation; glycolysis; pyruvate from D-glyceraldehyde 3-phosphate: step 3/5. Its function is as follows. Catalyzes the interconversion of 2-phosphoglycerate and 3-phosphoglycerate. The protein is 2,3-bisphosphoglycerate-independent phosphoglycerate mutase of Prochlorococcus marinus (strain MIT 9313).